The primary structure comprises 23 residues: Conotoxin as25a (23 aa).

4-hydroxyproline; partial is present on P4. P23 bears the 4-hydroxyproline; partial; alternate mark. Residue P23 is modified to Proline amide; alternate.

Post-translationally, the name as25b given in PubMed:23474143 corresponds to the hydroxylated peptide. The amidation of the C-terminus of this hydroxylated peptide is not directly confirmed. Contains 3 disulfide bonds. As to expression, expressed by the venom duct.

It localises to the secreted. Functionally, upon intracranial injection in mice, as25a (the toxin without the two 4-hydroxyprolines) provokes paralysis of the hind limbs and death with a dose of 240 pmol. This chain is Conotoxin as25a, found in Conus cancellatus (Cancellate cone).